The following is a 270-amino-acid chain: Zinc transporter ZupT (270 aa).

A run of 8 helical transmembrane segments spans residues 8–28 (ILVV…GGFI), 40–60 (LTFA…VELL), 78–98 (WIAI…DYLV), 131–151 (ILFA…TFAA), 162–182 (IALA…VPLY), 192–212 (LFYS…AMFF), 216–236 (FLTP…MVFI), and 250–270 (HHHI…IVLI). Asn-141 and Glu-144 together coordinate Fe(2+). Zn(2+) is bound by residues Glu-144 and His-169. Asn-170, Glu-173, and Glu-202 together coordinate Fe(2+). Glu-173 serves as a coordination point for Zn(2+).

It belongs to the ZIP transporter (TC 2.A.5) family. ZupT subfamily.

It localises to the cell membrane. It catalyses the reaction Zn(2+)(in) = Zn(2+)(out). In terms of biological role, mediates zinc uptake. May also transport other divalent cations. The sequence is that of Zinc transporter ZupT from Akkermansia muciniphila (strain ATCC BAA-835 / DSM 22959 / JCM 33894 / BCRC 81048 / CCUG 64013 / CIP 107961 / Muc).